Reading from the N-terminus, the 190-residue chain is TATA box-binding protein-like 1 (190 aa).

Belongs to the TBP family. In terms of assembly, binds TFIIA and TFIIB.

It localises to the cytoplasm. The protein resides in the nucleus. In terms of biological role, part of a specialized transcription system that mediates the transcription of most ribosomal proteins through the 5'-TCT-3' motif which is a core promoter element at these genes. Seems to also mediate the transcription of NF1. Does not bind the TATA box. This chain is TATA box-binding protein-like 1 (TBPL1), found in Pongo abelii (Sumatran orangutan).